Reading from the N-terminus, the 394-residue chain is Flavin-dependent monooxygenase, oxygenase subunit HsaA (394 aa).

FMN contacts are provided by residues W84, 118–120 (SSY), 141–143 (WSS), R263, 346–347 (AT), and 368–369 (HA).

The protein belongs to the HpaH/HsaA monooxygenase family. Homotetramer under anaerobic conditions. HsaAB monooxygenase consists of an oxygenase component HsaA and a reductase component HsaB.

It catalyses the reaction 3-hydroxy-9,10-secoandrosta-1,3,5(10)-triene-9,17-dione + FMNH2 + O2 = 3,4-dihydroxy-9,10-secoandrosta-1,3,5(10)-triene-9,17-dione + FMN + H2O + H(+). It functions in the pathway lipid metabolism; steroid biosynthesis. Functionally, catalyzes the o-hydroxylation of 3-hydroxy-9,10-secoandrosta-1,3,5(10)-triene-9,17-dione (3-HSA) to 3,4-dihydroxy-9,10-secoandrosta-1,3,5(10)-triene-9,17-dione (3,4-DHSA) in the catabolism of cholesterol. This Mycobacterium tuberculosis (strain CDC 1551 / Oshkosh) protein is Flavin-dependent monooxygenase, oxygenase subunit HsaA.